The following is a 100-amino-acid chain: Large ribosomal subunit protein uL23 (100 aa).

The protein belongs to the universal ribosomal protein uL23 family. As to quaternary structure, part of the 50S ribosomal subunit. Contacts protein L29, and trigger factor when it is bound to the ribosome.

Functionally, one of the early assembly proteins it binds 23S rRNA. One of the proteins that surrounds the polypeptide exit tunnel on the outside of the ribosome. Forms the main docking site for trigger factor binding to the ribosome. The protein is Large ribosomal subunit protein uL23 of Pseudothermotoga lettingae (strain ATCC BAA-301 / DSM 14385 / NBRC 107922 / TMO) (Thermotoga lettingae).